The chain runs to 320 residues: tRNA-cytidine(32) 2-sulfurtransferase (320 aa).

The PP-loop motif motif lies at Ser-54–Ser-59. Residues Cys-129, Cys-132, and Cys-220 each contribute to the [4Fe-4S] cluster site.

Belongs to the TtcA family. Homodimer. The cofactor is Mg(2+). Requires [4Fe-4S] cluster as cofactor.

The protein resides in the cytoplasm. The enzyme catalyses cytidine(32) in tRNA + S-sulfanyl-L-cysteinyl-[cysteine desulfurase] + AH2 + ATP = 2-thiocytidine(32) in tRNA + L-cysteinyl-[cysteine desulfurase] + A + AMP + diphosphate + H(+). It participates in tRNA modification. Catalyzes the ATP-dependent 2-thiolation of cytidine in position 32 of tRNA, to form 2-thiocytidine (s(2)C32). The sulfur atoms are provided by the cysteine/cysteine desulfurase (IscS) system. The chain is tRNA-cytidine(32) 2-sulfurtransferase from Bordetella pertussis (strain Tohama I / ATCC BAA-589 / NCTC 13251).